The primary structure comprises 489 residues: MESTFSSPAEAALQREAGSAGLRTSLGDLDRVYELERVVGFVRDLGCQRVALQFPDQLLGDAGAVAALLEEATGSKMFILGDTAYGSCCVDVLGAEQAGAQALVHFGPACLSPPARPLPVAFVLGQRSVALELCAKAFEAQNPDPTAPVVLLSEPSCAHALEALATLLRPRYLDLLVSSPALPLPAGSFNPNPEPLERFGRRFPLAPGRCLEEYGAFYVGGSEAISDPDLDPDLSRLLLGWAPGRPFSSCCPDTGRTQDEGVRAGRLRARRRYLIERARDARVVGLLAGTLGVARHREALAHLRNLTQAAGKRSYVLALGRPTPAKLANFPEVDVFVLLACPLGTLAPQPSGSFFRPVLAPCELEAACNPAWPPPGLAPHLTHYTDLLPGSPFHVPLPPPDSELWDAPDVSLITGDLRPPPVWKPSDDPGCSALTPKPQLELAESSPAASFLSSRSWKGLQPSLGQTPVTGAVSGRRGIAIAYEDEGNS.

Met1 carries the post-translational modification N-acetylmethionine. Position 7 is a phosphoserine (Ser7). The [4Fe-4S] cluster site is built by Cys89, Cys110, and Cys341. Phosphothreonine is present on Thr435. Phosphoserine occurs at positions 446 and 456. A Phosphothreonine modification is found at Thr467.

The protein belongs to the DPH1/DPH2 family. DPH2 subfamily. Component of the 2-(3-amino-3-carboxypropyl)histidine synthase complex composed of DPH1, DPH2, DPH3 and a NADH-dependent reductase. Interacts with DPH1. It depends on [4Fe-4S] cluster as a cofactor.

It participates in protein modification; peptidyl-diphthamide biosynthesis. Required for the first step of diphthamide biosynthesis, a post-translational modification of histidine which occurs in elongation factor 2. DPH1 and DPH2 transfer a 3-amino-3-carboxypropyl (ACP) group from S-adenosyl-L-methionine (SAM) to a histidine residue, the reaction is assisted by a reduction system comprising DPH3 and a NADH-dependent reductase. Facilitates the reduction of the catalytic iron-sulfur cluster found in the DPH1 subunit. This chain is 2-(3-amino-3-carboxypropyl)histidine synthase subunit 2 (DPH2), found in Bos taurus (Bovine).